Consider the following 413-residue polypeptide: Arginine biosynthesis bifunctional protein ArgJ (413 aa).

Residues T163, K189, T200, E286, N408, and T413 each contribute to the substrate site. The Nucleophile role is filled by T200.

This sequence belongs to the ArgJ family. In terms of assembly, heterotetramer of two alpha and two beta chains.

It is found in the cytoplasm. The enzyme catalyses N(2)-acetyl-L-ornithine + L-glutamate = N-acetyl-L-glutamate + L-ornithine. The catalysed reaction is L-glutamate + acetyl-CoA = N-acetyl-L-glutamate + CoA + H(+). Its pathway is amino-acid biosynthesis; L-arginine biosynthesis; L-ornithine and N-acetyl-L-glutamate from L-glutamate and N(2)-acetyl-L-ornithine (cyclic): step 1/1. It functions in the pathway amino-acid biosynthesis; L-arginine biosynthesis; N(2)-acetyl-L-ornithine from L-glutamate: step 1/4. Catalyzes two activities which are involved in the cyclic version of arginine biosynthesis: the synthesis of N-acetylglutamate from glutamate and acetyl-CoA as the acetyl donor, and of ornithine by transacetylation between N(2)-acetylornithine and glutamate. This Staphylococcus aureus (strain COL) protein is Arginine biosynthesis bifunctional protein ArgJ.